The following is a 126-amino-acid chain: Large ribosomal subunit protein bL12 (126 aa).

Low complexity predominate over residues 36-55 (APAPAAAPAAGGDQGGAEAA). Residues 36–57 (APAPAAAPAAGGDQGGAEAAEQ) form a disordered region.

Belongs to the bacterial ribosomal protein bL12 family. In terms of assembly, homodimer. Part of the ribosomal stalk of the 50S ribosomal subunit. Forms a multimeric L10(L12)X complex, where L10 forms an elongated spine to which 2 to 4 L12 dimers bind in a sequential fashion. Binds GTP-bound translation factors.

Forms part of the ribosomal stalk which helps the ribosome interact with GTP-bound translation factors. Is thus essential for accurate translation. The chain is Large ribosomal subunit protein bL12 from Natranaerobius thermophilus (strain ATCC BAA-1301 / DSM 18059 / JW/NM-WN-LF).